Consider the following 382-residue polypeptide: Diphosphomevalonate decarboxylase ERG19 (382 aa).

(R)-5-diphosphomevalonate is bound by residues 22 to 25, R78, 157 to 162, and T213; these read YWGK and SGSACR.

This sequence belongs to the diphosphomevalonate decarboxylase family. As to quaternary structure, homodimer.

The catalysed reaction is (R)-5-diphosphomevalonate + ATP = isopentenyl diphosphate + ADP + phosphate + CO2. The protein operates within isoprenoid biosynthesis; isopentenyl diphosphate biosynthesis via mevalonate pathway; isopentenyl diphosphate from (R)-mevalonate: step 3/3. In terms of biological role, diphosphomevalonate decarboxylase; part of the second module of ergosterol biosynthesis pathway that includes the middle steps of the pathway. MVD1 converts diphosphomevalonate into isopentenyl diphosphate. The second module is carried out in the vacuole and involves the formation of farnesyl diphosphate, which is also an important intermediate in the biosynthesis of ubiquinone, dolichol, heme and prenylated proteins. Activity by the mevalonate kinase ERG12 (FG05912) first converts mevalonate into 5-phosphomevalonate. 5-phosphomevalonate is then further converted to 5-diphosphomevalonate by the phosphomevalonate kinase ERG8 (FG09764). The diphosphomevalonate decarboxylase ERG19 (FG10424) then produces isopentenyl diphosphate. The isopentenyl-diphosphate delta-isomerase IDI1 (FG09722) then catalyzes the 1,3-allylic rearrangement of the homoallylic substrate isopentenyl (IPP) to its highly electrophilic allylic isomer, dimethylallyl diphosphate (DMAPP). Finally the farnesyl diphosphate synthase ERG20 (FG06784) catalyzes the sequential condensation of isopentenyl pyrophosphate with dimethylallyl pyrophosphate, and then with the resultant geranylpyrophosphate to the ultimate product farnesyl pyrophosphate. The chain is Diphosphomevalonate decarboxylase ERG19 from Gibberella zeae (strain ATCC MYA-4620 / CBS 123657 / FGSC 9075 / NRRL 31084 / PH-1) (Wheat head blight fungus).